Consider the following 473-residue polypeptide: Catalase easC (473 aa).

Positions 1–15 are enriched in low complexity; it reads MASEVSVASSGSEHS. A disordered region spans residues 1–31; the sequence is MASEVSVASSGSEHSGAQKCPFQDPGLSSMD. The active site involves His54. Tyr344 is a heme binding site. A disordered region spans residues 352–389; sequence LGPNNLDLPANRTKKLADGSRPEKAEMAPQKVPSQEHA. Positions 366-377 are enriched in basic and acidic residues; that stretch reads KLADGSRPEKAE.

This sequence belongs to the catalase family. Heme serves as cofactor.

It functions in the pathway alkaloid biosynthesis; ergot alkaloid biosynthesis. In terms of biological role, catalase; part of the gene cluster that mediates the biosynthesis of fungal ergot alkaloid. DmaW catalyzes the first step of ergot alkaloid biosynthesis by condensing dimethylallyl diphosphate (DMAP) and tryptophan to form 4-dimethylallyl-L-tryptophan. The second step is catalyzed by the methyltransferase easF that methylates 4-dimethylallyl-L-tryptophan in the presence of S-adenosyl-L-methionine, resulting in the formation of 4-dimethylallyl-L-abrine. The catalase easC and the FAD-dependent oxidoreductase easE then transform 4-dimethylallyl-L-abrine to chanoclavine-I which is further oxidized by easD in the presence of NAD(+), resulting in the formation of chanoclavine-I aldehyde. Agroclavine dehydrogenase easG then mediates the conversion of chanoclavine-I aldehyde to agroclavine via a non-enzymatic adduct reaction: the substrate is an iminium intermediate that is formed spontaneously from chanoclavine-I aldehyde in the presence of glutathione. The presence of easA is not required to complete this reaction. Further conversion of agroclavine to paspalic acid is a two-step process involving oxidation of agroclavine to elymoclavine and of elymoclavine to paspalic acid, the second step being performed by the elymoclavine oxidase cloA. Paspalic acid is then further converted to D-lysergic acid. Ergopeptines are assembled from D-lysergic acid and three different amino acids by the D-lysergyl-peptide-synthetases composed each of a monomudular and a trimodular nonribosomal peptide synthetase subunit. LpsB and lpsC encode the monomodular subunits responsible for D-lysergic acid activation and incorporation into the ergopeptine backbone. LpsA1 and A2 subunits encode the trimodular nonribosomal peptide synthetase assembling the tripeptide portion of ergopeptines. LpsA1 is responsible for formation of the major ergopeptine, ergotamine, and lpsA2 for alpha-ergocryptine, the minor ergopeptine of the total alkaloid mixture elaborated by C.purpurea. D-lysergyl-tripeptides are assembled by the nonribosomal peptide synthetases and released as N-(D-lysergyl-aminoacyl)-lactams. Cyclolization of the D-lysergyl-tripeptides is performed by the Fe(2+)/2-ketoglutarate-dependent dioxygenase easH which introduces a hydroxyl group into N-(D-lysergyl-aminoacyl)-lactam at alpha-C of the aminoacyl residue followed by spontaneous condensation with the terminal lactam carbonyl group. This chain is Catalase easC, found in Claviceps purpurea (strain 20.1) (Ergot fungus).